The following is a 423-amino-acid chain: Glucose-1-phosphate adenylyltransferase (423 aa).

Alpha-D-glucose 1-phosphate contacts are provided by residues Tyr107, Gly172, 187–188 (EK), and Ser205.

It belongs to the bacterial/plant glucose-1-phosphate adenylyltransferase family. Homotetramer.

It catalyses the reaction alpha-D-glucose 1-phosphate + ATP + H(+) = ADP-alpha-D-glucose + diphosphate. The protein operates within glycan biosynthesis; glycogen biosynthesis. Functionally, involved in the biosynthesis of ADP-glucose, a building block required for the elongation reactions to produce glycogen. Catalyzes the reaction between ATP and alpha-D-glucose 1-phosphate (G1P) to produce pyrophosphate and ADP-Glc. The polypeptide is Glucose-1-phosphate adenylyltransferase (Cereibacter sphaeroides (strain ATCC 17029 / ATH 2.4.9) (Rhodobacter sphaeroides)).